A 954-amino-acid chain; its full sequence is Bifunctional glutamine synthetase adenylyltransferase/adenylyl-removing enzyme (954 aa).

The interval 1–452 (MAVQKDSNKS…HFKATVGGEE (452 aa)) is adenylyl removase. An adenylyl transferase region spans residues 458–954 (EHWTAQLWNV…ILAIYQAILE (497 aa)).

It belongs to the GlnE family. Requires Mg(2+) as cofactor.

The enzyme catalyses [glutamine synthetase]-O(4)-(5'-adenylyl)-L-tyrosine + phosphate = [glutamine synthetase]-L-tyrosine + ADP. It carries out the reaction [glutamine synthetase]-L-tyrosine + ATP = [glutamine synthetase]-O(4)-(5'-adenylyl)-L-tyrosine + diphosphate. In terms of biological role, involved in the regulation of glutamine synthetase GlnA, a key enzyme in the process to assimilate ammonia. When cellular nitrogen levels are high, the C-terminal adenylyl transferase (AT) inactivates GlnA by covalent transfer of an adenylyl group from ATP to specific tyrosine residue of GlnA, thus reducing its activity. Conversely, when nitrogen levels are low, the N-terminal adenylyl removase (AR) activates GlnA by removing the adenylyl group by phosphorolysis, increasing its activity. The regulatory region of GlnE binds the signal transduction protein PII (GlnB) which indicates the nitrogen status of the cell. This Shewanella oneidensis (strain ATCC 700550 / JCM 31522 / CIP 106686 / LMG 19005 / NCIMB 14063 / MR-1) protein is Bifunctional glutamine synthetase adenylyltransferase/adenylyl-removing enzyme.